A 172-amino-acid chain; its full sequence is ATP synthase subunit b, chloroplastic (172 aa).

A helical membrane pass occupies residues 15–37 (ILATNLINLSAVLGVLIFFGKGV).

Belongs to the ATPase B chain family. As to quaternary structure, F-type ATPases have 2 components, F(1) - the catalytic core - and F(0) - the membrane proton channel. F(1) has five subunits: alpha(3), beta(3), gamma(1), delta(1), epsilon(1). F(0) has four main subunits: a(1), b(1), b'(1) and c(10-14). The alpha and beta chains form an alternating ring which encloses part of the gamma chain. F(1) is attached to F(0) by a central stalk formed by the gamma and epsilon chains, while a peripheral stalk is formed by the delta, b and b' chains.

The protein localises to the plastid. It is found in the chloroplast thylakoid membrane. Functionally, f(1)F(0) ATP synthase produces ATP from ADP in the presence of a proton or sodium gradient. F-type ATPases consist of two structural domains, F(1) containing the extramembraneous catalytic core and F(0) containing the membrane proton channel, linked together by a central stalk and a peripheral stalk. During catalysis, ATP synthesis in the catalytic domain of F(1) is coupled via a rotary mechanism of the central stalk subunits to proton translocation. Component of the F(0) channel, it forms part of the peripheral stalk, linking F(1) to F(0). This is ATP synthase subunit b, chloroplastic from Pisum sativum (Garden pea).